The following is a 439-amino-acid chain: Adenylosuccinate synthetase (439 aa).

GTP-binding positions include 12 to 18 (GDEGKGK) and 40 to 42 (GHT). Residue D13 is the Proton acceptor of the active site. Mg(2+) is bound by residues D13 and G40. Residues 13 to 16 (DEGK), 38 to 41 (NAGH), T137, R151, Q232, T247, and R311 contribute to the IMP site. The active-site Proton donor is the H41. Substrate is bound at residue 307–313 (ATTGRPR). GTP is bound by residues R313, 339–341 (KLD), and 421–423 (SNG).

Belongs to the adenylosuccinate synthetase family. In terms of assembly, homodimer. The cofactor is Mg(2+).

The protein localises to the cytoplasm. It carries out the reaction IMP + L-aspartate + GTP = N(6)-(1,2-dicarboxyethyl)-AMP + GDP + phosphate + 2 H(+). It functions in the pathway purine metabolism; AMP biosynthesis via de novo pathway; AMP from IMP: step 1/2. Functionally, plays an important role in the de novo pathway of purine nucleotide biosynthesis. Catalyzes the first committed step in the biosynthesis of AMP from IMP. The sequence is that of Adenylosuccinate synthetase from Salinibacter ruber (strain DSM 13855 / M31).